Here is a 397-residue protein sequence, read N- to C-terminus: Pyruvate dehydrogenase E1 component subunit alpha, mitochondrial (397 aa).

Pyruvate is bound by residues histidine 98, tyrosine 124, arginine 125, glycine 173, valine 175, aspartate 204, glycine 205, alanine 206, asparagine 233, and tyrosine 235. Residues tyrosine 124, arginine 125, glycine 173, valine 175, aspartate 204, glycine 205, alanine 206, and asparagine 233 each contribute to the thiamine diphosphate site. Position 204 (aspartate 204) interacts with Mg(2+). Residues asparagine 233 and tyrosine 235 each coordinate Mg(2+). Position 299 (histidine 299) interacts with thiamine diphosphate.

As to quaternary structure, tetramer of 2 alpha and 2 beta subunits. Thiamine diphosphate serves as cofactor. Mg(2+) is required as a cofactor.

The protein localises to the mitochondrion matrix. The catalysed reaction is N(6)-[(R)-lipoyl]-L-lysyl-[protein] + pyruvate + H(+) = N(6)-[(R)-S(8)-acetyldihydrolipoyl]-L-lysyl-[protein] + CO2. Its activity is regulated as follows. E1 activity is regulated by phosphorylation (inactivation) and dephosphorylation (activation) of the alpha subunit. Functionally, the pyruvate dehydrogenase complex catalyzes the overall conversion of pyruvate to acetyl-CoA and CO(2). It contains multiple copies of three enzymatic components: pyruvate dehydrogenase (E1), dihydrolipoamide acetyltransferase (E2) and lipoamide dehydrogenase (E3). The protein is Pyruvate dehydrogenase E1 component subunit alpha, mitochondrial of Pisum sativum (Garden pea).